The chain runs to 100 residues: MHLQPREQEKLMIVVAADLARRRQARGLQLNYPEAVAIISYELMEGARDGRSVAELMSWGTTILNRDDVQEGIAEMIPEVQVEATFPDGTKLITVHTPIR.

Belongs to the urease gamma subunit family. In terms of assembly, heterotrimer of UreA (gamma), UreB (beta) and UreC (alpha) subunits. Three heterotrimers associate to form the active enzyme.

It is found in the cytoplasm. It carries out the reaction urea + 2 H2O + H(+) = hydrogencarbonate + 2 NH4(+). Its pathway is nitrogen metabolism; urea degradation; CO(2) and NH(3) from urea (urease route): step 1/1. This Corynebacterium efficiens (strain DSM 44549 / YS-314 / AJ 12310 / JCM 11189 / NBRC 100395) protein is Urease subunit gamma.